The chain runs to 217 residues: UPF0502 protein swp_3027 (217 aa).

This sequence belongs to the UPF0502 family.

The sequence is that of UPF0502 protein swp_3027 from Shewanella piezotolerans (strain WP3 / JCM 13877).